We begin with the raw amino-acid sequence, 608 residues long: 2',5'-phosphodiesterase 12 (608 aa).

A mitochondrion-targeting transit peptide spans 1–16 (MWRLPGRAALRGVRSV). Residues 91-111 (AKKSRKNRAHSSGGAACAATG) form a disordered region. Low complexity predominate over residues 100–111 (HSSGGAACAATG). Ser-216 carries the post-translational modification Phosphoserine. Mg(2+) is bound by residues Glu-350, Asp-495, and Asn-497. Catalysis depends on Asp-495, which acts as the Proton donor/acceptor.

It belongs to the CCR4/nocturin family. Mg(2+) serves as cofactor.

The protein localises to the mitochondrion matrix. The enzyme catalyses Exonucleolytic cleavage of poly(A) to 5'-AMP.. In terms of biological role, enzyme that cleaves 2',5'-phosphodiester bond linking adenosines of the 5'-triphosphorylated oligoadenylates, triphosphorylated oligoadenylates referred as 2-5A modulates the 2-5A system. Degrades triphosphorylated 2-5A to produce AMP and ATP. Also cleaves 3',5'-phosphodiester bond of oligoadenylates. Plays a role as a negative regulator of the 2-5A system that is one of the major pathways for antiviral and antitumor functions induced by interferons (IFNs). Suppression of this enzyme increases cellular 2-5A levels and decreases viral replication in cultured small-airway epithelial cells. This is 2',5'-phosphodiesterase 12 (Pde12) from Rattus norvegicus (Rat).